The following is a 106-amino-acid chain: Large ribosomal subunit protein eL30 (106 aa).

It belongs to the eukaryotic ribosomal protein eL30 family.

The protein is Large ribosomal subunit protein eL30 (rpl30e) of Sulfurisphaera tokodaii (strain DSM 16993 / JCM 10545 / NBRC 100140 / 7) (Sulfolobus tokodaii).